Consider the following 663-residue polypeptide: Protein-arginine deiminase type-1 (663 aa).

14 residues coordinate Ca(2+): asparagine 153, aspartate 155, aspartate 157, aspartate 165, aspartate 176, aspartate 179, glutamine 351, glutamate 353, lysine 364, aspartate 371, serine 372, asparagine 375, phenylalanine 409, and leucine 412. Catalysis depends on cysteine 645, which acts as the Nucleophile.

Belongs to the protein arginine deiminase family. As to quaternary structure, monomer. Ca(2+) serves as cofactor. In terms of tissue distribution, detected in epidermal keratinocytes (at protein level). Epidermis, prostate, testis, placenta, spleen and thymus.

Its subcellular location is the cytoplasm. The catalysed reaction is L-arginyl-[protein] + H2O = L-citrullyl-[protein] + NH4(+). Functionally, catalyzes the deimination of arginine residues of proteins. The sequence is that of Protein-arginine deiminase type-1 (PADI1) from Homo sapiens (Human).